The sequence spans 91 residues: MPLHKSAEKRLRQSERRNARNRARKKELKTLIKNMQKLIEARAAKSEVESAYRSAVQKLDRLGVKSYIHANKASRKKSQLTRLFNGYAEAE.

Positions 1–18 are enriched in basic and acidic residues; the sequence is MPLHKSAEKRLRQSERRN. The interval 1–25 is disordered; sequence MPLHKSAEKRLRQSERRNARNRARK.

This sequence belongs to the bacterial ribosomal protein bS20 family.

In terms of biological role, binds directly to 16S ribosomal RNA. The protein is Small ribosomal subunit protein bS20 of Chlorobium luteolum (strain DSM 273 / BCRC 81028 / 2530) (Pelodictyon luteolum).